Consider the following 71-residue polypeptide: uncharacterized protein (71 aa).

The protein localises to the plastid. The protein resides in the chloroplast. This is an uncharacterized protein from Mesostigma viride (Green alga).